The following is a 411-amino-acid chain: Protrudin (411 aa).

The interval 1-27 (MQTSEREGSGPELSPSVMPEAPLESPP) is disordered. Over 1–66 (MQTSEREGSG…AGDGVRYLLR (66 aa)) the chain is Cytoplasmic. The interval 1-92 (MQTSEREGSG…LFLTLNEGAW (92 aa)) is sufficient for homooligomerization. Residues 1–205 (MQTSEREGSG…LYLLPLCWVL (205 aa)) form a sufficient for localization to endoplasmic reticulum tubular network and for interactions with REEP1, REEP5, ATL1, ATL2, ATL3 and SPAST region. The necessary for interaction with RAB11A and function in neurite outgrowth stretch occupies residues 51 to 64 (LEPLKDAGDGVRYL). Residues 67–87 (WQMPLCSLLTCLGLNVLFLTL) traverse the membrane as a helical segment. Position 88 (N88) is a topological domain, lumenal. The helical transmembrane segment at 89-109 (EGAWYSVGALMISVPALLGYL) threads the bilayer. The Cytoplasmic segment spans residues 110–187 (QEVCRARLPD…NPVVSSQFYG (78 aa)). The segment at residues 188-208 (ALLGTVCMLYLLPLCWVLTLL) is an intramembrane region (helical). Over 209-411 (NSTLFLGNVE…CASCNQTLSK (203 aa)) the chain is Cytoplasmic. Residues 234–286 (MNPKQEEHAFESPPPPDVGGKDGLMDSTPALTPTEDLTPGSVEEAEEAEPDEE) are disordered. Positions 271 to 361 (TPGSVEEAEE…GCSATFSVLK (91 aa)) are necessary for interaction with KIF5A. Residues 276 to 286 (EEAEEAEPDEE) are compositionally biased toward acidic residues. Positions 286–292 (EFKDAIE) are necessary for interaction with VAPA and function in cell projections formation. An FYVE-type zinc finger spans residues 344–410 (TNNFGNCTGC…VCASCNQTLS (67 aa)). Zn(2+) contacts are provided by C350, C353, C366, C369, C374, C377, C402, and C405.

Can form homooligomers (monomers, dimers and tetramers). Interacts with RAB11A (GDP-bound form); regulates RAB11A. Interacts with FKBP8; may negatively regulate ZFYVE27 phosphorylation. Interacts with VAPA (via MSP domain); may regulate ZFYVE27 retention in the endoplasmic reticulum and its function in cell projections formation. Interacts with VAPB (via MSP domain). Interacts with REEP1, REEP5 and ATL1. Interacts with ATL2, ATL3 and SPAST. Interacts with KIF5A and RTN3. Interacts with RAB11B (GDP-bound form), SURF4, KIF5B and KIF5C. Phosphorylated. Phosphorylation is induced by NGF through the MAPK/ERK pathway and modulates interaction with RAB11A.

It is found in the recycling endosome membrane. Its subcellular location is the endoplasmic reticulum membrane. It localises to the cell projection. The protein resides in the growth cone membrane. Functionally, key regulator of RAB11-dependent vesicular trafficking during neurite extension through polarized membrane transport. Promotes axonal elongation and contributes to the establishment of neuronal cell polarity. Involved in nerve growth factor-induced neurite formation in VAPA-dependent manner. Contributes to both the formation and stabilization of the tubular ER network. Involved in ER morphogenesis by regulating the sheet-to-tubule balance and possibly the density of tubule interconnections. Acts as an adapter protein and facilitates the interaction of KIF5A with VAPA, VAPB, SURF4, RAB11A, RAB11B and RTN3 and the ZFYVE27-KIF5A complex contributes to the transport of these proteins in neurons. Can induce formation of neurite-like membrane protrusions in non-neuronal cells in a KIF5A/B-dependent manner. This Homo sapiens (Human) protein is Protrudin (ZFYVE27).